Reading from the N-terminus, the 259-residue chain is MSKRTAFVMGASQGIGKAIALKLADQHFSLVINSRNLDNIESVKEDILAKHPEASVIVLAGDMSDQHTRAGIFQKIESQCGRLDVLINNIPGGAPDTFDNCNIEDMTATFTQKTVAYIDAIKRASSLMKQNEFGRIINIVGNLWKEPGANMFTNSMMNAALINASKNISIQLAPHNITVNCLNPGFIATDRYHQFVENVMKKNSISKQKAEEQIASGIPMKRVGSAEETAALAAFLASEEASYITGQQISADGGSMKSI.

Residues 12–15 (SQGI), 34–36 (SRN), 62–63 (DM), Ile90, Lys113, and 185–191 (GFIATDR) each bind NADP(+).

It belongs to the short-chain dehydrogenases/reductases (SDR) family. In terms of assembly, homodimer.

Its subcellular location is the cytoplasm. It functions in the pathway antibiotic biosynthesis; bacilysin biosynthesis. Its function is as follows. Along with the bacABCDEF operon, BacG is involved in the biosynthesis of the nonribosomally synthesized dipeptide antibiotic bacilysin, composed of L-alanine and L-anticapsin. Bacilysin is an irreversible inactivator of the glutaminase domain of glucosamine synthetase. BacG catalyzes the stereoselective reduction of exocyclic-delta(3),delta(5)-dihydro-hydroxyphenylpyruvate (ex-H2HPP), adding a pro-S hydride equivalent to C4 position to yield tetrahydro-hydroxyphenylpyruvate (H4HPP). Although the 3Z,7R-ex-H2HPP isomer is kinetically disfavored by BacB and produced in a smaller quantity than 3E,7R-ex-H2HPP, it is the preferred substrate for the conjugate reduction reaction of BacG. The chain is NADPH-dependent reductase BacG from Bacillus subtilis (strain 168).